Consider the following 441-residue polypeptide: Apolipoprotein N-acyltransferase (441 aa).

7 helical membrane-spanning segments follow: residues 23–43, 45–65, 75–95, 97–117, 133–153, 156–176, and 178–198; these read IIFKIIKVFFIAILLSNSIYL, FFENIFTQTISPFLAIWGLVL, YFWIGFFVGILWFWWIGLSSI, FNLNYLVPIIPIIIGFIYGLL, GIFCISFIHPLGFDWFNWGIF, YGFFDPSYRGIICIFLIAYFI, and EGYISRYYKIAIVLILFFSGF. The 227-residue stretch at 215 to 441 folds into the CN hydrolase domain; it reads INTNISQDQK…LSKEIFNDKK (227 aa). The active-site Proton acceptor is Glu256. Lys310 is an active-site residue. Cys359 acts as the Nucleophile in catalysis.

This sequence belongs to the CN hydrolase family. Apolipoprotein N-acyltransferase subfamily.

Its subcellular location is the cell inner membrane. It carries out the reaction N-terminal S-1,2-diacyl-sn-glyceryl-L-cysteinyl-[lipoprotein] + a glycerophospholipid = N-acyl-S-1,2-diacyl-sn-glyceryl-L-cysteinyl-[lipoprotein] + a 2-acyl-sn-glycero-3-phospholipid + H(+). Its pathway is protein modification; lipoprotein biosynthesis (N-acyl transfer). In terms of biological role, catalyzes the phospholipid dependent N-acylation of the N-terminal cysteine of apolipoprotein, the last step in lipoprotein maturation. This is Apolipoprotein N-acyltransferase from Campylobacter jejuni subsp. jejuni serotype O:2 (strain ATCC 700819 / NCTC 11168).